The following is a 186-amino-acid chain: Transposons Tn1721 resolvase (186 aa).

The 134-residue stretch at 4–137 (HRIGYVRVSS…EGIALAKQRG (134 aa)) folds into the Resolvase/invertase-type recombinase catalytic domain. Serine 12 (O-(5'-phospho-DNA)-serine intermediate) is an active-site residue. The segment at residues 164 to 183 (KAQLAREFNISRETLYQYLR) is a DNA-binding region (H-T-H motif).

The protein belongs to the site-specific recombinase resolvase family.

Functionally, resolvase catalyzes the resolution (a site-specific recombination) of the cointegrated replicon to yield the final transposition products. The sequence is that of Transposons Tn1721 resolvase (tnpR) from Escherichia coli.